The chain runs to 323 residues: 3-dehydroquinate synthase (323 aa).

Belongs to the archaeal-type DHQ synthase family.

It carries out the reaction 2-amino-2,3,7-trideoxy-D-lyxo-hept-6-ulosonate + NAD(+) + H2O = 3-dehydroquinate + NH4(+) + NADH + H(+). Catalyzes the oxidative deamination and cyclization of 2-amino-3,7-dideoxy-D-threo-hept-6-ulosonic acid (ADH) to yield 3-dehydroquinate (DHQ), which is fed into the canonical shikimic pathway of aromatic amino acid biosynthesis. This chain is 3-dehydroquinate synthase, found in Archaeoglobus fulgidus (strain ATCC 49558 / DSM 4304 / JCM 9628 / NBRC 100126 / VC-16).